The chain runs to 197 residues: Imidazoleglycerol-phosphate dehydratase (197 aa).

This sequence belongs to the imidazoleglycerol-phosphate dehydratase family.

It is found in the cytoplasm. The enzyme catalyses D-erythro-1-(imidazol-4-yl)glycerol 3-phosphate = 3-(imidazol-4-yl)-2-oxopropyl phosphate + H2O. It functions in the pathway amino-acid biosynthesis; L-histidine biosynthesis; L-histidine from 5-phospho-alpha-D-ribose 1-diphosphate: step 6/9. The protein is Imidazoleglycerol-phosphate dehydratase of Methylococcus capsulatus (strain ATCC 33009 / NCIMB 11132 / Bath).